The primary structure comprises 344 residues: tRNA N6-adenosine threonylcarbamoyltransferase (344 aa).

H110 and H114 together coordinate Fe cation. Residues 133–137 (VMSGA), D166, G179, and N278 contribute to the substrate site. D303 lines the Fe cation pocket.

This sequence belongs to the KAE1 / TsaD family. It depends on Fe(2+) as a cofactor.

The protein localises to the cytoplasm. The enzyme catalyses L-threonylcarbamoyladenylate + adenosine(37) in tRNA = N(6)-L-threonylcarbamoyladenosine(37) in tRNA + AMP + H(+). Functionally, required for the formation of a threonylcarbamoyl group on adenosine at position 37 (t(6)A37) in tRNAs that read codons beginning with adenine. Is involved in the transfer of the threonylcarbamoyl moiety of threonylcarbamoyl-AMP (TC-AMP) to the N6 group of A37, together with TsaE and TsaB. TsaD likely plays a direct catalytic role in this reaction. The sequence is that of tRNA N6-adenosine threonylcarbamoyltransferase from Chlamydia felis (strain Fe/C-56) (Chlamydophila felis).